The following is a 300-amino-acid chain: Sulfate adenylyltransferase subunit 2 (300 aa).

The interval 281–300 (RAIDRDEAGSMEKKKREGYF) is disordered.

Belongs to the PAPS reductase family. CysD subfamily. Heterodimer composed of CysD, the smaller subunit, and CysN.

The catalysed reaction is sulfate + ATP + H(+) = adenosine 5'-phosphosulfate + diphosphate. It functions in the pathway sulfur metabolism; hydrogen sulfide biosynthesis; sulfite from sulfate: step 1/3. Its function is as follows. With CysN forms the ATP sulfurylase (ATPS) that catalyzes the adenylation of sulfate producing adenosine 5'-phosphosulfate (APS) and diphosphate, the first enzymatic step in sulfur assimilation pathway. APS synthesis involves the formation of a high-energy phosphoric-sulfuric acid anhydride bond driven by GTP hydrolysis by CysN coupled to ATP hydrolysis by CysD. The chain is Sulfate adenylyltransferase subunit 2 from Brucella melitensis biotype 2 (strain ATCC 23457).